A 493-amino-acid polypeptide reads, in one-letter code: Telomere-binding protein subunit alpha (493 aa).

Positions 1 to 30 are disordered; the sequence is MSSAKRSTSRVSKKKAAPAKDGAPKKREQS. Over residues 7-17 the composition is skewed to basic residues; sequence STSRVSKKKAA.

It belongs to the telombin family. Heterodimer of an alpha and a beta subunit.

It is found in the nucleus. The protein localises to the chromosome. Its subcellular location is the telomere. Its function is as follows. May function as protective capping of the single-stranded telomeric overhang. May also participate in telomere length regulation during DNA replication. This chain is Telomere-binding protein subunit alpha (STY56V), found in Stylonychia mytilus (Ciliate).